The chain runs to 351 residues: Hydroxymethylglutaryl-CoA synthase (351 aa).

Glutamate 80 acts as the Proton donor/acceptor in catalysis. The active-site Acyl-thioester intermediate is the cysteine 112. Residues cysteine 112 and serine 153 each coordinate (3S)-3-hydroxy-3-methylglutaryl-CoA. Arginine 199 provides a ligand contact to CoA. Threonine 201 and histidine 234 together coordinate (3S)-3-hydroxy-3-methylglutaryl-CoA. The active-site Proton donor/acceptor is the histidine 234. Lysine 239 provides a ligand contact to CoA. Residues arginine 243, asparagine 266, and serine 296 each coordinate (3S)-3-hydroxy-3-methylglutaryl-CoA.

This sequence belongs to the thiolase-like superfamily. Archaeal HMG-CoA synthase family. As to quaternary structure, interacts with acetoacetyl-CoA thiolase that catalyzes the precedent step in the pathway and with a DUF35 protein. The acetoacetyl-CoA thiolase/HMG-CoA synthase complex channels the intermediate via a fused CoA-binding site, which allows for efficient coupling of the endergonic thiolase reaction with the exergonic HMGCS reaction.

The enzyme catalyses acetoacetyl-CoA + acetyl-CoA + H2O = (3S)-3-hydroxy-3-methylglutaryl-CoA + CoA + H(+). Its pathway is metabolic intermediate biosynthesis; (R)-mevalonate biosynthesis; (R)-mevalonate from acetyl-CoA: step 2/3. Catalyzes the condensation of acetyl-CoA with acetoacetyl-CoA to form 3-hydroxy-3-methylglutaryl-CoA (HMG-CoA). Functions in the mevalonate (MVA) pathway leading to isopentenyl diphosphate (IPP), a key precursor for the biosynthesis of isoprenoid compounds that are building blocks of archaeal membrane lipids. In Thermoplasma acidophilum (strain ATCC 25905 / DSM 1728 / JCM 9062 / NBRC 15155 / AMRC-C165), this protein is Hydroxymethylglutaryl-CoA synthase.